We begin with the raw amino-acid sequence, 136 residues long: UPF0299 membrane protein PM0880 (136 aa).

The next 4 membrane-spanning stretches (helical) occupy residues 5–25 (IVDL…GEWI), 29–49 (LNIG…GLTF), 67–87 (YMAL…DVLF), and 92–112 (VLLL…GLLS).

It belongs to the UPF0299 family.

Its subcellular location is the cell inner membrane. This chain is UPF0299 membrane protein PM0880, found in Pasteurella multocida (strain Pm70).